We begin with the raw amino-acid sequence, 130 residues long: C-type natriuretic peptide 2 (130 aa).

Residues 1–22 form the signal peptide; that stretch reads MAASSSSFVPLVLLFLAIPVEP. Residues 23 to 103 constitute a propeptide that is removed on maturation; that stretch reads RPSMTRDEAQ…LQQQSKTTRR (81 aa). The tract at residues 57–77 is disordered; sequence ELLPRRPGPPRSFGASPGALR. C114 and C130 are oxidised to a cystine.

Belongs to the natriuretic peptide family.

The protein resides in the secreted. Its function is as follows. Exhibits natriuretic and vasodepressant activity. Has cGMP-stimulating activity. May help to regulate body fluid homeostasis in a variety of aquatic environments. This is C-type natriuretic peptide 2 from Takifugu rubripes (Japanese pufferfish).